Consider the following 104-residue polypeptide: UPF0134 protein MPN_104 (104 aa).

It belongs to the UPF0134 family.

This is UPF0134 protein MPN_104 from Mycoplasma pneumoniae (strain ATCC 29342 / M129 / Subtype 1) (Mycoplasmoides pneumoniae).